Consider the following 604-residue polypeptide: Elongation factor 4 (604 aa).

Residues Lys7–Ser189 form the tr-type G domain. Residues Asp19–Thr24 and Asn136–Asp139 contribute to the GTP site.

The protein belongs to the TRAFAC class translation factor GTPase superfamily. Classic translation factor GTPase family. LepA subfamily.

The protein localises to the cell membrane. The catalysed reaction is GTP + H2O = GDP + phosphate + H(+). Required for accurate and efficient protein synthesis under certain stress conditions. May act as a fidelity factor of the translation reaction, by catalyzing a one-codon backward translocation of tRNAs on improperly translocated ribosomes. Back-translocation proceeds from a post-translocation (POST) complex to a pre-translocation (PRE) complex, thus giving elongation factor G a second chance to translocate the tRNAs correctly. Binds to ribosomes in a GTP-dependent manner. The sequence is that of Elongation factor 4 from Lachnospira eligens (strain ATCC 27750 / DSM 3376 / VPI C15-48 / C15-B4) (Eubacterium eligens).